We begin with the raw amino-acid sequence, 397 residues long: Urea transporter 2 (397 aa).

5 consecutive transmembrane segments (helical) span residues 68-85, 92-109, 115-135, 143-163, and 172-192; these read VMFVNNPLSGILIVIGLF, AIAGCLGTVMSTLTALIL, AIASGLHGYNGVLVGLLIAVF, WWLLLPVIVMSMSCPILSSAL, and LPVFTLPFNIAVTLYLAATGH. The N-linked (GlcNAc...) asparagine glycan is linked to Asn210. Helical transmembrane passes span 239–257, 264–280, 287–303, 309–329, and 331–351; these read WTGGIFLIALFISSPLICL, TMGMLAALTIATPFDSI, FNSTLACIAVGGMFYVI, LLAVACALFAAYVGAALTNVL, and VFGLPTCTWPFCISALIFLLL.

Belongs to the urea transporter family. Kidney.

It is found in the apical cell membrane. The protein localises to the basolateral cell membrane. It carries out the reaction urea(in) = urea(out). With respect to regulation, inhibited by urea analogs and phloretin. Its function is as follows. Mediates the transport of urea driven by a concentration gradient across the cell membrane of the renal inner medullary collecting duct which is critical to the urinary concentrating mechanism. The protein is Urea transporter 2 (SLC14A2) of Oryctolagus cuniculus (Rabbit).